The primary structure comprises 180 residues: Oligoribonuclease (180 aa).

The Exonuclease domain maps to 7 to 170 (LIWIDLEMTG…DDIRESIAEL (164 aa)). Tyr128 is an active-site residue.

It belongs to the oligoribonuclease family.

It localises to the cytoplasm. In terms of biological role, 3'-to-5' exoribonuclease specific for small oligoribonucleotides. This Pseudomonas fluorescens (strain Pf0-1) protein is Oligoribonuclease.